Here is a 201-residue protein sequence, read N- to C-terminus: MQPFTTHTGLAVMIDSTNIDTDQIIPKQFLSKVTRDGFGVHLFHDWRYLDDAGDQPNPEFSLNQSRYRGASILLAQENFGCGSSREHAPWALADFGLRAIIAQSFADIFYGNSINNGLLPVALTHAQVRQLMDEVAAEAGAQITVDLTSCKVVSPSGAEFSFTLAESARHKLLNGLDAIGLTLSHAAQIGQYETQIQGWRR.

This sequence belongs to the LeuD family. LeuD type 1 subfamily. As to quaternary structure, heterodimer of LeuC and LeuD.

It carries out the reaction (2R,3S)-3-isopropylmalate = (2S)-2-isopropylmalate. It participates in amino-acid biosynthesis; L-leucine biosynthesis; L-leucine from 3-methyl-2-oxobutanoate: step 2/4. Functionally, catalyzes the isomerization between 2-isopropylmalate and 3-isopropylmalate, via the formation of 2-isopropylmaleate. This is 3-isopropylmalate dehydratase small subunit from Shewanella baltica (strain OS155 / ATCC BAA-1091).